The sequence spans 525 residues: Ankyrin repeat domain-containing protein SOWAHC (525 aa).

The segment at Cys-84–Thr-263 is disordered. Ser-88 is subject to Phosphoserine. Positions Ala-101–Pro-112 are enriched in low complexity. A phosphoserine mark is found at Ser-126, Ser-213, and Ser-226. Over residues Ser-230–Asp-241 the composition is skewed to gly residues. Low complexity predominate over residues Ser-242–Ser-251. 2 ANK repeats span residues Thr-301–Leu-330 and Gly-340–Ile-370. A disordered region spans residues Asp-434 to Gly-525. Basic residues predominate over residues Ile-468 to Phe-477. Basic and acidic residues predominate over residues Arg-489–Val-509.

Belongs to the SOWAH family.

This chain is Ankyrin repeat domain-containing protein SOWAHC (SOWAHC), found in Homo sapiens (Human).